Consider the following 997-residue polypeptide: Chromosomal passenger complex protein bir1 (997 aa).

BIR repeat units follow at residues 25–99 (RLDT…PWAY) and 120–194 (REQT…VFFT). Zn(2+) contacts are provided by Cys-163, Cys-166, His-183, and Cys-190. Disordered regions lie at residues 217-329 (EDLT…FSKG), 370-527 (TVSD…ENDE), 682-701 (TRDV…NHEE), 755-782 (SPKL…EKEA), and 817-838 (RTSV…ETKV). Residues 240–252 (TLNFSPSRKNNLN) are compositionally biased toward polar residues. Basic residues predominate over residues 288–299 (PRRKNKSPKKSK). Over residues 311–320 (SDEDEDDDDL) the composition is skewed to acidic residues. A compositionally biased stretch (polar residues) spans 370–392 (TVSDITGHQSVTDESDEQNNCMS). Residues 408-423 (SVVSKSKEISSSVSSV) show a composition bias toward low complexity. Basic and acidic residues predominate over residues 426–451 (EQNHTEKQVAIETPEQQKVEKEDEHL). Composition is skewed to polar residues over residues 463-476 (KQPI…SSPD) and 485-512 (RVSS…FSNI). Residues 756-772 (PKLQSKNNQTVEAVNTE) are compositionally biased toward polar residues. Residues 773-782 (TSDKLQEKEA) show a composition bias toward basic and acidic residues. A compositionally biased stretch (polar residues) spans 817 to 830 (RTSVQNGTRSVSKN).

As to quaternary structure, component of the CPC complex at least composed of ark1, bir1 and pic1. Interacts with the mitotic checkpoint complex (MCC) subunit mad3. Post-translationally, phosphorylated by ark1.

It is found in the nucleus. It localises to the cytoplasm. The protein resides in the cytoskeleton. Its subcellular location is the spindle. The protein localises to the chromosome. It is found in the centromere. Its function is as follows. Component of the chromosomal passenger complex (CPC), a complex that acts as a key regulator of chromosome segregation and cytokinesis. Has a role in chromosome segregation by recruiting condensin and ark1 kinase to appropriate sites as the cell progresses through mitosis. Ark1 activity depends upon bir1 function and phosphorylation. Ark1 with bir1 function is required for full-scale association with kinetochores and formation of a complex with mad3. This Schizosaccharomyces pombe (strain 972 / ATCC 24843) (Fission yeast) protein is Chromosomal passenger complex protein bir1 (bir1).